Here is a 593-residue protein sequence, read N- to C-terminus: Probable 5'-nucleotidase (593 aa).

A signal peptide spans 1–21; it reads MKRFIPHRVIHAVCIGLALVG. Cys22 is lipidated: N-palmitoyl cysteine. Residue Cys22 is the site of S-diacylglycerol cysteine attachment. A divalent metal cation-binding residues include Asp41, His43, Asp91, Asn123, and His224. Residues Phe456 and 539 to 545 contribute to the substrate site; that span reads YIARGKD.

This sequence belongs to the 5'-nucleotidase family. A divalent metal cation serves as cofactor.

Its subcellular location is the cell membrane. The enzyme catalyses a ribonucleoside 5'-phosphate + H2O = a ribonucleoside + phosphate. The sequence is that of Probable 5'-nucleotidase from Treponema pallidum (strain Nichols).